A 506-amino-acid polypeptide reads, in one-letter code: H/ACA ribonucleoprotein complex subunit DKC1 (506 aa).

The interval 1–26 (MADTESKKEKKRKSKKISDEEVGDIQ) is disordered. Aspartate 120 acts as the Nucleophile in catalysis. The PUA domain occupies 291–366 (HKRIVMKDSA…VVAKIKRVIM (76 aa)). Disordered stretches follow at residues 391–410 (GLLD…WKEG) and 419–506 (VKKG…ADSD). Residues 421–434 (KGGEASAKRKRDES) are compositionally biased toward basic and acidic residues. Over residues 457–466 (EKKKKKKEKK) the composition is skewed to basic residues.

This sequence belongs to the pseudouridine synthase TruB family. In terms of assembly, part of the H/ACA small nucleolar ribonucleoprotein (H/ACA snoRNP) complex. The complex binds a box H/ACA small nucleolar RNA (snoRNA), which may target the specific site of modification within the RNA substrate.

It localises to the nucleus. The protein resides in the nucleolus. The protein localises to the cajal body. The catalysed reaction is uridine in 5S rRNA = pseudouridine in 5S rRNA. In terms of biological role, catalytic subunit of H/ACA small nucleolar ribonucleoprotein (H/ACA snoRNP) complex, which catalyzes pseudouridylation of rRNA. This involves the isomerization of uridine such that the ribose is subsequently attached to C5, instead of the normal N1. Pseudouridine ('psi') residues may serve to stabilize the conformation of rRNAs. Required for ribosome biogenesis and telomere maintenance. This Danio rerio (Zebrafish) protein is H/ACA ribonucleoprotein complex subunit DKC1.